The sequence spans 142 residues: Putative tyrosine phosphatase 123R (142 aa).

The Tyrosine-protein phosphatase domain occupies 2–137 (EPTKIVENLY…LAQFERWLNS (136 aa)). Cysteine 81 (phosphocysteine intermediate) is an active-site residue.

Belongs to the protein-tyrosine phosphatase family.

This chain is Putative tyrosine phosphatase 123R, found in Invertebrate iridescent virus 6 (IIV-6).